The primary structure comprises 302 residues: TATA-box-binding protein (302 aa).

Disordered regions lie at residues 1–22 and 50–81; these read MEQN…GAMT and SLLE…QTPQ. Residues 50 to 70 are compositionally biased toward low complexity; the sequence is SLLEEQQRQQQQQQAASQQQG. 2 consecutive repeat copies span residues 128–204 and 218–295.

This sequence belongs to the TBP family. In terms of tissue distribution, enriched in testis but hardly detectable in the ovary (at protein level).

Its subcellular location is the nucleus. Functionally, general transcription factor that functions at the core of the DNA-binding multiprotein factor TFIID. Binding of TFIID to the TATA box is the initial transcriptional step of the pre-initiation complex (PIC), playing a role in the activation of eukaryotic genes transcribed by RNA polymerase II. Members of the TBP family are differentially required for transcription and development during early embryogenesis. Regulates mRNA levels in the early embryo by both transcriptional and post-transcriptional mechanisms. Required for transcription of a subset of genes at the mid-blastula transition (MBT). Negatively regulates the expression of other embryonic genes, including autoregulation of the tbp promoter itself. Also functions within a transcription-dependent mechanism to direct the temporally-regulated degradation of a subset of maternal mRNAs after the MBT. This is part of a general mechanism to regulate the maternal to zygotic transition and is required for normal embryonic development. Binds to promoters of a subset of genes. Required for gastrulation. The sequence is that of TATA-box-binding protein from Danio rerio (Zebrafish).